The sequence spans 318 residues: Ribosomal RNA small subunit methyltransferase H (318 aa).

S-adenosyl-L-methionine contacts are provided by residues 33-35 (GGH), Asp53, Phe80, Asp101, and Gln108.

This sequence belongs to the methyltransferase superfamily. RsmH family.

It localises to the cytoplasm. The enzyme catalyses cytidine(1402) in 16S rRNA + S-adenosyl-L-methionine = N(4)-methylcytidine(1402) in 16S rRNA + S-adenosyl-L-homocysteine + H(+). Specifically methylates the N4 position of cytidine in position 1402 (C1402) of 16S rRNA. This Symbiobacterium thermophilum (strain DSM 24528 / JCM 14929 / IAM 14863 / T) protein is Ribosomal RNA small subunit methyltransferase H.